The chain runs to 356 residues: Glutenin, low molecular weight subunit (356 aa).

The N-terminal stretch at Met-1–Ala-19 is a signal peptide. The disordered stretch occupies residues Gln-20–Arg-179.

The protein belongs to the gliadin/glutenin family. As to quaternary structure, disulfide-bridge linked aggregates.

Functionally, glutenins are high-molecular weight seed storage proteins of wheat endosperm. Thought to be responsible for the visco-elastic property of wheat dough. In Triticum aestivum (Wheat), this protein is Glutenin, low molecular weight subunit.